The sequence spans 89 residues: MAISQEKKNEIIAKYARHEGDTGSAEVQIAVLTADINEINEHLRVHRKDFHSQRGLMKKIGHRRNLLAYLRKTDVQRYRDLIKSLGLRR.

Belongs to the universal ribosomal protein uS15 family. As to quaternary structure, part of the 30S ribosomal subunit. Forms a bridge to the 50S subunit in the 70S ribosome, contacting the 23S rRNA.

Its function is as follows. One of the primary rRNA binding proteins, it binds directly to 16S rRNA where it helps nucleate assembly of the platform of the 30S subunit by binding and bridging several RNA helices of the 16S rRNA. Forms an intersubunit bridge (bridge B4) with the 23S rRNA of the 50S subunit in the ribosome. The polypeptide is Small ribosomal subunit protein uS15 (Pediococcus pentosaceus (strain ATCC 25745 / CCUG 21536 / LMG 10740 / 183-1w)).